The chain runs to 353 residues: UDP-galactose transporter (353 aa).

6 helical membrane-spanning segments follow: residues 147–167 (LGPMKWFSLFLLTGGIAIVQL), 184–204 (VTGFSAVLVACLISGLAGVYF), 215–235 (LWVRNVQLSFFSLFPCLFTIL), 254–274 (IVWLAILLQAGGGIIVALCVA), 279–299 (IMKNFSTSISIIISSLASVYL), and 302–322 (FKISLTFLIGVMLVIAATFLY). Positions 325-353 (PESKPSPSRGTYIPMTTQDAAAKDVDHKH) are disordered. Over residues 329–343 (PSPSRGTYIPMTTQD) the composition is skewed to polar residues.

Belongs to the nucleotide-sugar transporter family. SLC35A subfamily.

It localises to the golgi apparatus membrane. Essential for the transport of UDP-galactose into the lumen of Golgi apparatus. In Schizosaccharomyces pombe (strain 972 / ATCC 24843) (Fission yeast), this protein is UDP-galactose transporter (gms1).